Reading from the N-terminus, the 346-residue chain is Ribosomal RNA small subunit methyltransferase H (346 aa).

S-adenosyl-L-methionine-binding positions include 46 to 48 (GGY), Asp63, Phe90, Asp113, and Gln120. The tract at residues 270-346 (GGSAGSRHMP…LPETNELARS (77 aa)) is disordered.

It belongs to the methyltransferase superfamily. RsmH family.

The protein resides in the cytoplasm. It carries out the reaction cytidine(1402) in 16S rRNA + S-adenosyl-L-methionine = N(4)-methylcytidine(1402) in 16S rRNA + S-adenosyl-L-homocysteine + H(+). Its function is as follows. Specifically methylates the N4 position of cytidine in position 1402 (C1402) of 16S rRNA. The polypeptide is Ribosomal RNA small subunit methyltransferase H (Brucella abortus (strain S19)).